A 100-amino-acid chain; its full sequence is uncharacterized protein (100 aa).

This is an uncharacterized protein from Borreliella burgdorferi (strain ATCC 35210 / DSM 4680 / CIP 102532 / B31) (Borrelia burgdorferi).